Consider the following 256-residue polypeptide: Small ribosomal subunit protein eS1 (256 aa).

A2 is subject to N-acetylalanine; partial.

It belongs to the eukaryotic ribosomal protein eS1 family. In terms of assembly, component of the small ribosomal subunit. Mature ribosomes consist of a small (40S) and a large (60S) subunit. The 40S subunit contains about 33 different proteins and 1 molecule of RNA (18S). The 60S subunit contains about 49 different proteins and 3 molecules of RNA (25S, 5.8S and 5S).

The protein resides in the cytoplasm. This Sclerotinia sclerotiorum (strain ATCC 18683 / 1980 / Ss-1) (White mold) protein is Small ribosomal subunit protein eS1 (rps1).